We begin with the raw amino-acid sequence, 122 residues long: Putative iron-sulfur cluster insertion protein ErpA (122 aa).

The iron-sulfur cluster site is built by cysteine 50, cysteine 114, and cysteine 116.

This sequence belongs to the HesB/IscA family. In terms of assembly, homodimer. It depends on iron-sulfur cluster as a cofactor.

In terms of biological role, required for insertion of 4Fe-4S clusters. The chain is Putative iron-sulfur cluster insertion protein ErpA from Burkholderia mallei (strain NCTC 10247).